A 155-amino-acid polypeptide reads, in one-letter code: uncharacterized protein (155 aa).

The next 5 helical transmembrane spans lie at 4–24 (IVGALAVFVITYALFSAAGYL), 46–66 (AIGIIWAILFALISLSAAIVY), 77–97 (FWFTLLINYVLNQAFSYFQFT), 101–121 (LLAASLDCLLVAITAIVLLII), and 130–150 (SYLLLPYFLWSAFATFLSFTI).

This sequence belongs to the TspO/BZRP family.

The protein localises to the cell membrane. This is an uncharacterized protein from Bacillus subtilis (strain 168).